A 236-amino-acid polypeptide reads, in one-letter code: 2,3,4,5-tetrahydropyridine-2,6-dicarboxylate N-acetyltransferase (236 aa).

The protein belongs to the transferase hexapeptide repeat family. DapH subfamily.

It carries out the reaction (S)-2,3,4,5-tetrahydrodipicolinate + acetyl-CoA + H2O = L-2-acetamido-6-oxoheptanedioate + CoA. It participates in amino-acid biosynthesis; L-lysine biosynthesis via DAP pathway; LL-2,6-diaminopimelate from (S)-tetrahydrodipicolinate (acetylase route): step 1/3. Catalyzes the transfer of an acetyl group from acetyl-CoA to tetrahydrodipicolinate. This Clostridium beijerinckii (strain ATCC 51743 / NCIMB 8052) (Clostridium acetobutylicum) protein is 2,3,4,5-tetrahydropyridine-2,6-dicarboxylate N-acetyltransferase.